The primary structure comprises 290 residues: Nucleotide-binding protein Bpet0443 (290 aa).

ATP is bound at residue 9–16 (GISGSGKS). A GTP-binding site is contributed by 58–61 (DVRS).

This sequence belongs to the RapZ-like family.

In terms of biological role, displays ATPase and GTPase activities. In Bordetella petrii (strain ATCC BAA-461 / DSM 12804 / CCUG 43448), this protein is Nucleotide-binding protein Bpet0443.